The primary structure comprises 660 residues: Solute carrier family 5 member 4 (660 aa).

The Cytoplasmic portion of the chain corresponds to 1–28 (MASTLSPSTVTKTPGPPEISERIQNAAD). The helical transmembrane segment at 29-47 (ISVIVIYFVVVMAVGLWAM) threads the bilayer. At 48 to 64 (LRTNRGTVGGFFLAGRD) the chain is on the extracellular side. Residues 65–85 (VTWWPMGASLFASNIGSGHFV) traverse the membrane as a helical segment. At 86–105 (GLAGTGAASGIAIAAFEWNA) the chain is on the cytoplasmic side. A helical membrane pass occupies residues 106 to 126 (LLLLLVLGWFFVPIYIKAGVM). Topologically, residues 127 to 171 (TMPEYLRKRFGGKRLQIYLSILSLFICVALRISSDIFSGAIFIKL) are extracellular. Residues 172-191 (ALGLDLYLAIFSLLAITAIY) traverse the membrane as a helical segment. At 192–208 (TITGGLASVIYTDTLQT) the chain is on the cytoplasmic side. A helical membrane pass occupies residues 209–229 (IIMLIGSFILMGFAFVEVGGY). The Extracellular portion of the chain corresponds to 230 to 270 (ESFTEKYMNAIPTIVEGDNLTISPKCYTPQGDSFHIFRDAV). N248 carries an N-linked (GlcNAc...) asparagine glycan. A helical transmembrane segment spans residues 271 to 291 (TGDIPWPGMIFGMTVVAAWYW). At 292–314 (CTDQVIVQRCLSGKDMSHVKAAC) the chain is on the cytoplasmic side. A helical membrane pass occupies residues 315–334 (IMCGYLKLLPMFLMVMPGMI). Topologically, residues 335-423 (SRILYTEKVA…RKQASEKELL (89 aa)) are extracellular. A helical membrane pass occupies residues 424-443 (IAGRLFIILLIVISIVWVPL). Residues 444–455 (VQVAQNGQLFHY) are Cytoplasmic-facing. A helical transmembrane segment spans residues 456 to 476 (IESISSYLGPPIAAVFLLAIF). Over 477–526 (CKRVNEQGAFWGLIIGFVMGLIRMIAEFVYGTGSCLAASNCPQIICGVHY) the chain is Extracellular. Residues 527–547 (LYFALILFFVSILVVLAISLL) traverse the membrane as a helical segment. Topologically, residues 548–638 (TKPIPDVHLY…TDTSEKPLWK (91 aa)) are cytoplasmic. The helical transmembrane segment at 639 to 659 (TIVNINAILLLAVAVFVHGYF) threads the bilayer.

Belongs to the sodium:solute symporter (SSF) (TC 2.A.21) family. Kidney, intestine, liver, skeletal muscle and spleen.

It is found in the cell membrane. It carries out the reaction D-glucose(out) + 2 Na(+)(out) = D-glucose(in) + 2 Na(+)(in). With respect to regulation, inhibited by phlorizin. In terms of biological role, low-affinity sodium/D-glucose symporter with a great selectivity for sugars (D-glucose &gt;&gt; D-galactose). Na(+) and D-glucose transport are tightly coupled at neutral pH, but at acidic pH, ion transport is uncoupled from sugar transport. This chain is Solute carrier family 5 member 4, found in Sus scrofa (Pig).